A 197-amino-acid chain; its full sequence is dITP/XTP pyrophosphatase (197 aa).

Residue 8-13 coordinates substrate; it reads TGNAGK. Mg(2+)-binding residues include Glu-40 and Asp-69. Asp-69 functions as the Proton acceptor in the catalytic mechanism. Substrate-binding positions include Ser-70, 154–157, Lys-177, and 182–183; these read FGYD and HR.

Belongs to the HAM1 NTPase family. In terms of assembly, homodimer. The cofactor is Mg(2+).

It carries out the reaction XTP + H2O = XMP + diphosphate + H(+). It catalyses the reaction dITP + H2O = dIMP + diphosphate + H(+). The enzyme catalyses ITP + H2O = IMP + diphosphate + H(+). Pyrophosphatase that catalyzes the hydrolysis of nucleoside triphosphates to their monophosphate derivatives, with a high preference for the non-canonical purine nucleotides XTP (xanthosine triphosphate), dITP (deoxyinosine triphosphate) and ITP. Seems to function as a house-cleaning enzyme that removes non-canonical purine nucleotides from the nucleotide pool, thus preventing their incorporation into DNA/RNA and avoiding chromosomal lesions. This Salmonella paratyphi A (strain ATCC 9150 / SARB42) protein is dITP/XTP pyrophosphatase (rdgB).